Here is a 253-residue protein sequence, read N- to C-terminus: MPAPALTGPQYLREGLKLILSPGLRLFVLLPLSINIVLFCGLIYLAVHQFELWVDTFMPTLPHWLSFLSYILWPLFVALVLLMVFFTFTVVANIIAAPFNGFLSEKVEAVIRGVDESPDFSWAELVAMVPRTLAREARKLGYMLPRMLGLFILSFIPVANIIAAPLWLLFGVWMMAIQYIDYPADNHKLGWNEMLGWLKSKRWQSLSFGGIVYVALLIPVVNLLMMPAAVAAATLFWVRERGADALPIAHARD.

The next 4 helical transmembrane spans lie at 27 to 47 (FVLL…YLAV), 71 to 91 (ILWP…FTVV), 150 to 170 (LFIL…WLLF), and 211 to 231 (IVYV…AAVA).

Belongs to the CysZ family.

The protein resides in the cell inner membrane. Its function is as follows. High affinity, high specificity proton-dependent sulfate transporter, which mediates sulfate uptake. Provides the sulfur source for the cysteine synthesis pathway. The polypeptide is Sulfate transporter CysZ (Pseudomonas syringae pv. tomato (strain ATCC BAA-871 / DC3000)).